We begin with the raw amino-acid sequence, 210 residues long: LexA repressor (210 aa).

Residues Arg31–Lys51 constitute a DNA-binding region (H-T-H motif). Catalysis depends on for autocatalytic cleavage activity residues Ser126 and Lys163.

It belongs to the peptidase S24 family. Homodimer.

It catalyses the reaction Hydrolysis of Ala-|-Gly bond in repressor LexA.. Represses a number of genes involved in the response to DNA damage (SOS response), including recA and lexA. In the presence of single-stranded DNA, RecA interacts with LexA causing an autocatalytic cleavage which disrupts the DNA-binding part of LexA, leading to derepression of the SOS regulon and eventually DNA repair. This Actinobacillus succinogenes (strain ATCC 55618 / DSM 22257 / CCUG 43843 / 130Z) protein is LexA repressor.